A 254-amino-acid chain; its full sequence is 3-deoxy-manno-octulosonate cytidylyltransferase (254 aa).

Belongs to the KdsB family.

The protein resides in the cytoplasm. It carries out the reaction 3-deoxy-alpha-D-manno-oct-2-ulosonate + CTP = CMP-3-deoxy-beta-D-manno-octulosonate + diphosphate. It participates in nucleotide-sugar biosynthesis; CMP-3-deoxy-D-manno-octulosonate biosynthesis; CMP-3-deoxy-D-manno-octulosonate from 3-deoxy-D-manno-octulosonate and CTP: step 1/1. Its pathway is bacterial outer membrane biogenesis; lipopolysaccharide biosynthesis. Activates KDO (a required 8-carbon sugar) for incorporation into bacterial lipopolysaccharide in Gram-negative bacteria. This is 3-deoxy-manno-octulosonate cytidylyltransferase from Geobacter metallireducens (strain ATCC 53774 / DSM 7210 / GS-15).